Consider the following 153-residue polypeptide: Deoxyuridine 5'-triphosphate nucleotidohydrolase (153 aa).

Residues 71 to 73 (RSG), asparagine 84, 88 to 90 (TID), and lysine 98 contribute to the substrate site.

The protein belongs to the dUTPase family. It depends on Mg(2+) as a cofactor.

The catalysed reaction is dUTP + H2O = dUMP + diphosphate + H(+). Its pathway is pyrimidine metabolism; dUMP biosynthesis; dUMP from dCTP (dUTP route): step 2/2. This enzyme is involved in nucleotide metabolism: it produces dUMP, the immediate precursor of thymidine nucleotides and it decreases the intracellular concentration of dUTP so that uracil cannot be incorporated into DNA. The protein is Deoxyuridine 5'-triphosphate nucleotidohydrolase of Wolbachia pipientis subsp. Culex pipiens (strain wPip).